Consider the following 258-residue polypeptide: Hydroxyacylglutathione hydrolase (258 aa).

The Zn(2+) site is built by His-54, His-56, Asp-58, His-59, His-113, Asp-138, and His-176.

The protein belongs to the metallo-beta-lactamase superfamily. Glyoxalase II family. As to quaternary structure, monomer. The cofactor is Zn(2+).

The catalysed reaction is an S-(2-hydroxyacyl)glutathione + H2O = a 2-hydroxy carboxylate + glutathione + H(+). Its pathway is secondary metabolite metabolism; methylglyoxal degradation; (R)-lactate from methylglyoxal: step 2/2. In terms of biological role, thiolesterase that catalyzes the hydrolysis of S-D-lactoyl-glutathione to form glutathione and D-lactic acid. The chain is Hydroxyacylglutathione hydrolase from Synechococcus sp. (strain ATCC 27144 / PCC 6301 / SAUG 1402/1) (Anacystis nidulans).